The following is a 226-amino-acid chain: ATP synthase F(0) complex subunit a (226 aa).

7 consecutive transmembrane segments (helical) span residues Ser-11 to Ile-31, Leu-37 to Met-54, Leu-72 to Phe-92, Leu-98 to Thr-118, Ile-138 to Val-158, Thr-178 to Leu-198, and Leu-199 to Ile-219.

It belongs to the ATPase A chain family. As to quaternary structure, component of the ATP synthase complex composed at least of ATP5F1A/subunit alpha, ATP5F1B/subunit beta, ATP5MC1/subunit c (homooctomer), MT-ATP6/subunit a, MT-ATP8/subunit 8, ATP5ME/subunit e, ATP5MF/subunit f, ATP5MG/subunit g, ATP5MK/subunit k, ATP5MJ/subunit j, ATP5F1C/subunit gamma, ATP5F1D/subunit delta, ATP5F1E/subunit epsilon, ATP5PF/subunit F6, ATP5PB/subunit b, ATP5PD/subunit d, ATP5PO/subunit OSCP. ATP synthase complex consists of a soluble F(1) head domain (subunits alpha(3) and beta(3)) - the catalytic core - and a membrane F(0) domain - the membrane proton channel (subunits c, a, 8, e, f, g, k and j). These two domains are linked by a central stalk (subunits gamma, delta, and epsilon) rotating inside the F1 region and a stationary peripheral stalk (subunits F6, b, d, and OSCP). Interacts with DNAJC30; interaction is direct.

The protein resides in the mitochondrion inner membrane. The enzyme catalyses H(+)(in) = H(+)(out). Functionally, subunit a, of the mitochondrial membrane ATP synthase complex (F(1)F(0) ATP synthase or Complex V) that produces ATP from ADP in the presence of a proton gradient across the membrane which is generated by electron transport complexes of the respiratory chain. ATP synthase complex consist of a soluble F(1) head domain - the catalytic core - and a membrane F(1) domain - the membrane proton channel. These two domains are linked by a central stalk rotating inside the F(1) region and a stationary peripheral stalk. During catalysis, ATP synthesis in the catalytic domain of F(1) is coupled via a rotary mechanism of the central stalk subunits to proton translocation. With the subunit c (ATP5MC1), forms the proton-conducting channel in the F(0) domain, that contains two crucial half-channels (inlet and outlet) that facilitate proton movement from the mitochondrial intermembrane space (IMS) into the matrix. Protons are taken up via the inlet half-channel and released through the outlet half-channel, following a Grotthuss mechanism. The sequence is that of ATP synthase F(0) complex subunit a from Lycodon semicarinatus (Ryukyu odd-tooth snake).